A 1505-amino-acid chain; its full sequence is ABC transporter C family member 13 (1505 aa).

Transmembrane regions (helical) follow at residues 11-31, 54-68, 71-91, 102-122, 131-151, 171-191, 313-333, 336-356, 367-387, 421-441, 447-467, and 534-554; these read EAAA…LLLL, AVDG…VGAW, AALA…SYEV, ALLL…LAMQ, FPVL…GIAY, MVAN…GVMG, AFAA…SYFV, LSGK…FFVA, WYLG…AMVY, AWYF…LAIL, IAMV…VPVA, and FVFW…CILL. Residues 314–589 enclose the ABC transmembrane type-1 1 domain; it reads FAAVNTIVSY…FPDLISMIAQ (276 aa). In terms of domain architecture, ABC transporter 1 spans 623-846; that stretch reads ININDATFSW…GTDFNALVCA (224 aa). 658-665 provides a ligand contact to ATP; sequence GVIGSGKS. Positions 881–897 are enriched in polar residues; the sequence is DNLKNKVSNNEKPSSTR. The tract at residues 881–919 is disordered; the sequence is DNLKNKVSNNEKPSSTRGIKEKKKKPEERKKKRSVQEEE. The segment covering 904-919 has biased composition (basic and acidic residues); the sequence is KKPEERKKKRSVQEEE. The next 6 membrane-spanning stretches (helical) occupy residues 940–960, 980–1000, 1055–1077, 1081–1103, 1149–1169, and 1174–1194; these read GTLI…QIAS, SVVL…FVFV, IAFR…AVMS, WQVL…YYIA, LLDC…WLCL, and LSTF…PGTI. The ABC transmembrane type-1 2 domain maps to 945–1215; that stretch reads LIILAQTMFQ…GLNLNARMSR (271 aa). The region spanning 1262 to 1496 is the ABC transporter 2 domain; sequence IELVDLKVRY…KSSMFMQLVS (235 aa). Position 1296-1303 (1296-1303) interacts with ATP; the sequence is GRTGSGKS.

It belongs to the ABC transporter superfamily. ABCC family. Conjugate transporter (TC 3.A.1.208) subfamily.

Its subcellular location is the membrane. Functionally, ABC transporter that may affect phytic acid transport and compartmentalization. May function directly or indirectly in removing phytic acid from the cytosol or in vesicle trafficking. Required for phytic acid accumulation in developing seeds. Phytic acid is the primary storage form of phosphorus in cereal grains and other plant seeds. This chain is ABC transporter C family member 13, found in Oryza sativa subsp. indica (Rice).